The following is a 304-amino-acid chain: Non-specific ribonucleoside hydrolase RihC (304 aa).

Residue histidine 233 is part of the active site.

The protein belongs to the IUNH family. RihC subfamily.

In terms of biological role, hydrolyzes both purine and pyrimidine ribonucleosides with a broad-substrate specificity. The chain is Non-specific ribonucleoside hydrolase RihC from Escherichia coli O6:H1 (strain CFT073 / ATCC 700928 / UPEC).